We begin with the raw amino-acid sequence, 122 residues long: Large ribosomal subunit protein uL14c (122 aa).

Belongs to the universal ribosomal protein uL14 family. As to quaternary structure, part of the 50S ribosomal subunit.

It localises to the plastid. It is found in the chloroplast. Functionally, binds to 23S rRNA. In Drimys granadensis, this protein is Large ribosomal subunit protein uL14c.